The primary structure comprises 292 residues: Thyroxine 5-deiodinase (292 aa).

At Val-1 to Thr-30 the chain is on the cytoplasmic side. The helical; Signal-anchor for type II membrane protein transmembrane segment at Ala-31–Leu-50 threads the bilayer. Over Asp-51–Val-292 the chain is Extracellular. Sec-158 is a catalytic residue. Residue Sec-158 is a non-standard amino acid, selenocysteine.

This sequence belongs to the iodothyronine deiodinase family. In terms of assembly, monomer. Homodimer. May undergo minor heretodimerization with DIO1 and DIO2.

The protein resides in the cell membrane. The protein localises to the endosome membrane. The catalysed reaction is 3,3',5'-triiodo-L-thyronine + iodide + A + H(+) = L-thyroxine + AH2. The enzyme catalyses 3,3'-diiodo-L-thyronine + iodide + A + H(+) = 3,3',5-triiodo-L-thyronine + AH2. It carries out the reaction 3-iodo-L-thyronine + iodide + A + H(+) = 3,5-diiodo-L-thyronine + AH2. It catalyses the reaction L-thyronine + iodide + A + H(+) = 3-iodo-L-thyronine + AH2. The catalysed reaction is 3',5'-diiodo-L-thyronine + iodide + A + H(+) = 3,3',5'-triiodo-L-thyronine + AH2. The enzyme catalyses 3'-iodo-L-thyronine + iodide + A + H(+) = 3,3'-diiodo-L-thyronine + AH2. It carries out the reaction 3,3',5'-triiodothyronamine + iodide + A + H(+) = 3,3',5,5'-tetraiodothyronamine + AH2. It catalyses the reaction 3',5'-diiodothyronamine + iodide + A + H(+) = 3,3',5'-triiodothyronamine + AH2. The catalysed reaction is 3,3'-diiodothyronamine + iodide + A + H(+) = 3,3',5-triiodothyronamine + AH2. The enzyme catalyses 3-iodothyronamine + iodide + A + H(+) = 3,5-diiodothyronamine + AH2. It carries out the reaction 3'-iodothyronamine + iodide + A + H(+) = 3,3'-diiodothyronamine + AH2. It catalyses the reaction thyronamine + iodide + A + H(+) = 3-iodothyronamine + AH2. In terms of biological role, plays a crucial role in the metabolism of thyroid hormones (TH) and has specific roles in TH activation and inactivation by deiodination.Catalyzes the deiodination of L-thyroxine (T4) to 3,3',5'-triiodothyronine (rT3), 3,5,3'-triiodothyronine (T3) to 3,3'-diiodothyronine (3,3'-T2), 3,5-diiodothyronine (3,5-T2) to 3-monoiodothyronine (3-T1), rT3 to 3',5'-diiodothyronine (3',5'-T2) and 3,3'-T2 to 3'-monoiodothyronine (3'-T1) via inner-ring deiodination (IRD). Catalyzes the deiodination of 3-T1 to L-thyronine (T0) via outer-ring deiodination (ORD). Catalyzes the tyrosyl ring deiodinations of 3,3',5,5'-tetraiodothyronamine, 3,3',5'-triiodothyronamine, 3,5,3'-triiodothyronamine, 3,5-diiodothyronamine, 3,3'-diiodothyronamine and 3-iodothyronamine. The chain is Thyroxine 5-deiodinase (DIO3) from Ovis aries (Sheep).